The sequence spans 809 residues: Ubiquitin carboxyl-terminal hydrolase 1 (809 aa).

The 638-residue stretch at A101–D738 folds into the USP domain. C110 serves as the catalytic Nucleophile. A disordered region spans residues N143–P195. Residues K162–S183 are compositionally biased toward basic residues. The segment covering S184–E194 has biased composition (basic and acidic residues). A phosphoserine mark is found at S530, S531, and S555. The interval A569 to E596 is disordered. S618 and S638 each carry phosphoserine. The residue at position 652 (T652) is a Phosphothreonine. S653, S654, and S670 each carry phosphoserine. H697 functions as the Proton acceptor in the catalytic mechanism. Residues L750–N809 are disordered. A Phosphoserine modification is found at S755. The segment covering Q765 to Q777 has biased composition (basic and acidic residues). The span at E778–Q789 shows a compositional bias: acidic residues. The segment covering E790–N809 has biased composition (basic and acidic residues).

It belongs to the peptidase C19 family.

It catalyses the reaction Thiol-dependent hydrolysis of ester, thioester, amide, peptide and isopeptide bonds formed by the C-terminal Gly of ubiquitin (a 76-residue protein attached to proteins as an intracellular targeting signal).. Has an ATP-independent isopeptidase activity, cleaving at the C-terminus of the ubiquitin moiety in natural or engineered linear fusion proteins, irrespective of their size or the presence of an N-terminal extension to ubiquitin. This is Ubiquitin carboxyl-terminal hydrolase 1 (UBP1) from Saccharomyces cerevisiae (strain ATCC 204508 / S288c) (Baker's yeast).